The sequence spans 156 residues: Small ribosomal subunit protein uS7 (156 aa).

It belongs to the universal ribosomal protein uS7 family. Part of the 30S ribosomal subunit. Contacts proteins S9 and S11.

Its function is as follows. One of the primary rRNA binding proteins, it binds directly to 16S rRNA where it nucleates assembly of the head domain of the 30S subunit. Is located at the subunit interface close to the decoding center, probably blocks exit of the E-site tRNA. The sequence is that of Small ribosomal subunit protein uS7 from Mycoplasmopsis agalactiae (strain NCTC 10123 / CIP 59.7 / PG2) (Mycoplasma agalactiae).